A 103-amino-acid chain; its full sequence is Protein RALF-like 18 (103 aa).

Positions 1 to 32 (MMNNMKLLIIAVMIISAALLPALVVGSRPVKC) are cleaved as a signal peptide. Positions 33-58 (DNCMDGGEKEEIMKMSSGVDVSHRIL) are cleaved as a propeptide — removed in mature form. C92 and C98 are joined by a disulfide.

Belongs to the plant rapid alkalinization factor (RALF) family. Proteolytically cleaved, probably by S1P, a subtilisin-like serine protease (subtilase).

It localises to the secreted. Its function is as follows. Cell signaling peptide that may regulate plant stress, growth, and development. Mediates a rapid alkalinization of extracellular space by mediating a transient increase in the cytoplasmic Ca(2+) concentration leading to a calcium-dependent signaling events through a cell surface receptor and a concomitant activation of some intracellular mitogen-activated protein kinases. The protein is Protein RALF-like 18 (RALFL18) of Arabidopsis thaliana (Mouse-ear cress).